Here is a 474-residue protein sequence, read N- to C-terminus: Lactococcin A secretion protein LcnD (474 aa).

Residues 1-21 are Cytoplasmic-facing; that stretch reads MFDKKLLESSELYDKRYRNFS. A helical transmembrane segment spans residues 22–44; it reads TLIILPLFILLVGGVIFTFFAHK. Topologically, residues 45-474 are extracellular; it reads ELTVISTGSI…LDKIMGRGNQ (430 aa).

It belongs to the membrane fusion protein (MFP) (TC 8.A.1) family.

The protein resides in the cell membrane. In terms of biological role, involved in the secretion of lactococcin A. The polypeptide is Lactococcin A secretion protein LcnD (lcnD) (Lactococcus lactis subsp. cremoris (Streptococcus cremoris)).